The primary structure comprises 220 residues: Chloramphenicol acetyltransferase (220 aa).

The Proton acceptor role is filled by histidine 195.

Belongs to the chloramphenicol acetyltransferase family. Homotrimer.

It carries out the reaction chloramphenicol + acetyl-CoA = chloramphenicol 3-acetate + CoA. This enzyme is an effector of chloramphenicol resistance in bacteria. This chain is Chloramphenicol acetyltransferase (cat), found in Streptomyces acrimycini.